The primary structure comprises 276 residues: Bis(5'-nucleosyl)-tetraphosphatase, symmetrical (276 aa).

This sequence belongs to the Ap4A hydrolase family.

The enzyme catalyses P(1),P(4)-bis(5'-adenosyl) tetraphosphate + H2O = 2 ADP + 2 H(+). Hydrolyzes diadenosine 5',5'''-P1,P4-tetraphosphate to yield ADP. The sequence is that of Bis(5'-nucleosyl)-tetraphosphatase, symmetrical from Legionella pneumophila subsp. pneumophila (strain Philadelphia 1 / ATCC 33152 / DSM 7513).